The sequence spans 338 residues: Ornithine carbamoyltransferase (338 aa).

Residues Ser-56–Thr-59, Gln-83, Arg-107, and His-134–Gln-137 each bind carbamoyl phosphate. Residues Asn-168, Asp-232, and Ser-236 to Met-237 contribute to the L-ornithine site. Carbamoyl phosphate contacts are provided by residues Cys-274–Leu-275 and Arg-320.

The protein belongs to the aspartate/ornithine carbamoyltransferase superfamily. OTCase family.

The protein resides in the cytoplasm. It carries out the reaction carbamoyl phosphate + L-ornithine = L-citrulline + phosphate + H(+). It participates in amino-acid biosynthesis; L-arginine biosynthesis; L-arginine from L-ornithine and carbamoyl phosphate: step 1/3. Its function is as follows. Reversibly catalyzes the transfer of the carbamoyl group from carbamoyl phosphate (CP) to the N(epsilon) atom of ornithine (ORN) to produce L-citrulline. The chain is Ornithine carbamoyltransferase from Photorhabdus laumondii subsp. laumondii (strain DSM 15139 / CIP 105565 / TT01) (Photorhabdus luminescens subsp. laumondii).